The sequence spans 306 residues: Dermonecrotic toxin LiSicTox-alphaIA2ai (306 aa).

The signal sequence occupies residues 1 to 18; the sequence is MLPYIALILVCWSVLSQA. Positions 19-26 are excised as a propeptide; it reads AQTDVEGR. The active site involves His-38. Mg(2+) contacts are provided by Glu-58 and Asp-60. His-74 acts as the Nucleophile in catalysis. Intrachain disulfides connect Cys-78–Cys-84 and Cys-80–Cys-223. Asp-118 is a Mg(2+) binding site. Asn-283 carries an N-linked (GlcNAc...) asparagine glycan.

It belongs to the arthropod phospholipase D family. Class II subfamily. Class IIa sub-subfamily. Mg(2+) is required as a cofactor. In terms of tissue distribution, expressed by the venom gland.

It is found in the secreted. It carries out the reaction an N-(acyl)-sphingosylphosphocholine = an N-(acyl)-sphingosyl-1,3-cyclic phosphate + choline. The enzyme catalyses an N-(acyl)-sphingosylphosphoethanolamine = an N-(acyl)-sphingosyl-1,3-cyclic phosphate + ethanolamine. The catalysed reaction is a 1-acyl-sn-glycero-3-phosphocholine = a 1-acyl-sn-glycero-2,3-cyclic phosphate + choline. It catalyses the reaction a 1-acyl-sn-glycero-3-phosphoethanolamine = a 1-acyl-sn-glycero-2,3-cyclic phosphate + ethanolamine. In terms of biological role, dermonecrotic toxins cleave the phosphodiester linkage between the phosphate and headgroup of certain phospholipids (sphingolipid and lysolipid substrates), forming an alcohol (often choline) and a cyclic phosphate. This toxin acts on sphingomyelin (SM). It may also act on ceramide phosphoethanolamine (CPE), lysophosphatidylcholine (LPC) and lysophosphatidylethanolamine (LPE), but not on lysophosphatidylserine (LPS), and lysophosphatidylglycerol (LPG). It acts by transphosphatidylation, releasing exclusively cyclic phosphate products as second products. It induces complement-dependent hemolysis, dermonecrosis, vascular permeability and platelet aggregation. This chain is Dermonecrotic toxin LiSicTox-alphaIA2ai, found in Loxosceles intermedia (Brown spider).